Reading from the N-terminus, the 118-residue chain is UPF0102 protein Swit_0572 (118 aa).

The protein belongs to the UPF0102 family.

In Rhizorhabdus wittichii (strain DSM 6014 / CCUG 31198 / JCM 15750 / NBRC 105917 / EY 4224 / RW1) (Sphingomonas wittichii), this protein is UPF0102 protein Swit_0572.